A 149-amino-acid chain; its full sequence is MQVVLRQAIPGLGKPGEIVNVKPGYARNYLFPRQMAVRVTPGILKEQQVRLEQEAARKLAERQQAENYKTALETIGRFVIRKKVGEHDLLFGQVTTSDIAEVVLATSGLDIDRRNILLNEEIKKTGVYPVQVKLHPEVTATLRIQVTPE.

It belongs to the bacterial ribosomal protein bL9 family.

Binds to the 23S rRNA. This chain is Large ribosomal subunit protein bL9, found in Synechococcus sp. (strain JA-2-3B'a(2-13)) (Cyanobacteria bacterium Yellowstone B-Prime).